The following is a 128-amino-acid chain: Cytochrome c' (128 aa).

Residues glutamine 13, glutamine 17, glutamate 69, threonine 70, cysteine 118, cysteine 121, and histidine 122 each contribute to the heme c site.

Post-translationally, binds 1 heme c group covalently per subunit.

Its function is as follows. Cytochrome c' is the most widely occurring bacterial c-type cytochrome. Cytochromes c' are high-spin proteins and the heme has no sixth ligand. Their exact function is not known. This is Cytochrome c' from Magnetospirillum fulvum (Rhodospirillum fulvum).